The sequence spans 402 residues: Type II NADH:quinone oxidoreductase (402 aa).

Residues 12–16 (GAGYA), 39–40 (NK), and V83 each bind FAD. E172 is an active-site residue. Residues D302, 319 to 320 (AQ), and K379 each bind FAD.

This sequence belongs to the NADH dehydrogenase family. The cofactor is FAD.

It is found in the cell membrane. The enzyme catalyses a quinone + NADH + H(+) = a quinol + NAD(+). Functionally, alternative, nonproton pumping NADH:quinone oxidoreductase that delivers electrons to the respiratory chain by oxidation of NADH and reduction of quinones, and contributes to the regeneration of NAD(+). This chain is Type II NADH:quinone oxidoreductase, found in Staphylococcus aureus (strain MSSA476).